Consider the following 236-residue polypeptide: tRNA (guanine-N(7)-)-methyltransferase (236 aa).

Residues 1–23 (MEADVQRAQQAQLEKGSSVPPWT) are disordered. S-adenosyl-L-methionine is bound by residues Asp-69, Glu-94, Asn-121, and Asp-144. Asp-144 is a catalytic residue. Positions 148 and 180 each coordinate substrate.

It belongs to the class I-like SAM-binding methyltransferase superfamily. TrmB family.

The enzyme catalyses guanosine(46) in tRNA + S-adenosyl-L-methionine = N(7)-methylguanosine(46) in tRNA + S-adenosyl-L-homocysteine. It participates in tRNA modification; N(7)-methylguanine-tRNA biosynthesis. Functionally, catalyzes the formation of N(7)-methylguanine at position 46 (m7G46) in tRNA. The protein is tRNA (guanine-N(7)-)-methyltransferase of Synechococcus sp. (strain JA-3-3Ab) (Cyanobacteria bacterium Yellowstone A-Prime).